Here is a 257-residue protein sequence, read N- to C-terminus: NAD-capped RNA hydrolase NudC (257 aa).

R69 provides a ligand contact to substrate. Zn(2+) contacts are provided by C98 and C101. E111 lines the substrate pocket. The Zn(2+) site is built by C116 and C119. Y124 lines the substrate pocket. Residues 125–248 (PQIAPCIIVA…TVARRLIEDT (124 aa)) enclose the Nudix hydrolase domain. The a divalent metal cation site is built by A158, E174, and E178. The Nudix box signature appears at 159–180 (GFVEVGETLEQAVAREVMEESG). 192–199 (QPWPFPQS) is a substrate binding site. E219 lines the a divalent metal cation pocket. Residue A241 participates in substrate binding.

It belongs to the Nudix hydrolase family. NudC subfamily. As to quaternary structure, homodimer. Mg(2+) serves as cofactor. It depends on Mn(2+) as a cofactor. Zn(2+) is required as a cofactor.

The enzyme catalyses a 5'-end NAD(+)-phospho-ribonucleoside in mRNA + H2O = a 5'-end phospho-adenosine-phospho-ribonucleoside in mRNA + beta-nicotinamide D-ribonucleotide + 2 H(+). It catalyses the reaction NAD(+) + H2O = beta-nicotinamide D-ribonucleotide + AMP + 2 H(+). It carries out the reaction NADH + H2O = reduced beta-nicotinamide D-ribonucleotide + AMP + 2 H(+). MRNA decapping enzyme that specifically removes the nicotinamide adenine dinucleotide (NAD) cap from a subset of mRNAs by hydrolyzing the diphosphate linkage to produce nicotinamide mononucleotide (NMN) and 5' monophosphate mRNA. The NAD-cap is present at the 5'-end of some mRNAs and stabilizes RNA against 5'-processing. Has preference for mRNAs with a 5'-end purine. Catalyzes the hydrolysis of a broad range of dinucleotide pyrophosphates. This is NAD-capped RNA hydrolase NudC from Salmonella dublin (strain CT_02021853).